Reading from the N-terminus, the 593-residue chain is Tectonic-1 (593 aa).

The signal sequence occupies residues methionine 1–threonine 22. Residues lysine 37–proline 72 are disordered. N-linked (GlcNAc...) asparagine glycosylation occurs at asparagine 41. A compositionally biased stretch (polar residues) spans serine 42–threonine 58. Asparagine 303 carries an N-linked (GlcNAc...) asparagine glycan. Omega-N-methylarginine is present on arginine 486. Asparagine 536 carries N-linked (GlcNAc...) asparagine glycosylation.

This sequence belongs to the tectonic family. In terms of assembly, part of the tectonic-like complex (also named B9 complex).

It localises to the cytoplasm. The protein resides in the cytoskeleton. Its subcellular location is the cilium basal body. It is found in the secreted. Its function is as follows. Component of the tectonic-like complex, a complex localized at the transition zone of primary cilia and acting as a barrier that prevents diffusion of transmembrane proteins between the cilia and plasma membranes. Regulator of Hedgehog (Hh), required for both activation and inhibition of the Hh pathway in the patterning of the neural tube. During neural tube development, it is required for formation of the most ventral cell types and for full Hh pathway activation. Functions in Hh signal transduction to fully activate the pathway in the presence of high Hh levels and to repress the pathway in the absence of Hh signals. Modulates Hh signal transduction downstream of SMO and RAB23. This is Tectonic-1 (Tctn1) from Mus musculus (Mouse).